Here is a 570-residue protein sequence, read N- to C-terminus: T-cell surface protein tactile (570 aa).

The first 21 residues, 1 to 21 (MEKKWTYCAVYSIIQMHLVRG), serve as a signal peptide directing secretion. The Extracellular segment spans residues 22–504 (IVEETFGAEE…TVISKPKDGM (483 aa)). The 88-residue stretch at 38–125 (GSDVNLTCQT…YECSFTLYPE (88 aa)) folds into the Ig-like V-type 1 domain. 12 N-linked (GlcNAc...) asparagine glycosylation sites follow: asparagine 42, asparagine 107, asparagine 148, asparagine 156, asparagine 166, asparagine 184, asparagine 261, asparagine 284, asparagine 334, asparagine 352, asparagine 374, and asparagine 431. Residues cysteine 45 and cysteine 118 are joined by a disulfide bond. Residues 156–222 (NGTLEIPCFQ…YRLYLSPVQI (67 aa)) form the Ig-like V-type 2 domain. Residues cysteine 163 and cysteine 231 are joined by a disulfide bond. Residues 253-359 (PEIPMIVENN…VWNSSSEKIT (107 aa)) form the Ig-like C2-type domain. A disulfide bridge connects residues cysteine 274 and cysteine 339. Residues 373–403 (LNATESTLGTRPSLANSISPTGYRTPSSTAH) form a disordered region. Residues 441–486 (AKHSAPWMPSETNSSPSSGAGSTLPGDIFTSTTRASSEVPTTANVS) form a disordered region. Polar residues-rich tracts occupy residues 450 to 461 (SETNSSPSSGAG) and 469 to 486 (FTST…ANVS). A glycan (N-linked (GlcNAc...) asparagine) is linked at asparagine 484. The helical transmembrane segment at 505–525 (SWPVIVAALLLSCFVLFGLGV) threads the bilayer. Topologically, residues 526 to 570 (RKWCQYQKEIMQRPPPFKPPPPPIKYTCIQESIGSDLPCHELETL) are cytoplasmic.

Homodimer; disulfide-linked. Interacts with PVR.

The protein localises to the membrane. May be involved in adhesive interactions of activated T and NK cells during the late phase of the immune response. Promotes NK cell-target adhesion by interacting with PVR present on target cells. May function at a time after T and NK cells have penetrated the endothelium using integrins and selectins, when they are actively engaging diseased cells and moving within areas of inflammation. This Bos taurus (Bovine) protein is T-cell surface protein tactile (CD96).